Reading from the N-terminus, the 153-residue chain is uncharacterized protein (153 aa).

Positions 1 to 22 are cleaved as a signal peptide; that stretch reads MKLLKKGTTVLFVMIMAVMLVA. A lipid anchor (N-palmitoyl cysteine) is attached at Cys23. A lipid anchor (S-diacylglycerol cysteine) is attached at Cys23. The segment at 121–153 is disordered; sequence LPGMASTGDVSKGISMKESEKMLKSQGFKEVEK. The span at 135–153 shows a compositional bias: basic and acidic residues; that stretch reads SMKESEKMLKSQGFKEVEK.

The protein to E.coli YehR.

It localises to the cell membrane. This is an uncharacterized protein from Listeria innocua serovar 6a (strain ATCC BAA-680 / CLIP 11262).